A 325-amino-acid polypeptide reads, in one-letter code: ATP phosphoribosyltransferase (325 aa).

Belongs to the ATP phosphoribosyltransferase family. Long subfamily. Mg(2+) is required as a cofactor.

It localises to the cytoplasm. The catalysed reaction is 1-(5-phospho-beta-D-ribosyl)-ATP + diphosphate = 5-phospho-alpha-D-ribose 1-diphosphate + ATP. It participates in amino-acid biosynthesis; L-histidine biosynthesis; L-histidine from 5-phospho-alpha-D-ribose 1-diphosphate: step 1/9. Feedback inhibited by histidine. Its function is as follows. Catalyzes the condensation of ATP and 5-phosphoribose 1-diphosphate to form N'-(5'-phosphoribosyl)-ATP (PR-ATP). Has a crucial role in the pathway because the rate of histidine biosynthesis seems to be controlled primarily by regulation of HisG enzymatic activity. The chain is ATP phosphoribosyltransferase from Rhodopseudomonas palustris (strain BisA53).